The sequence spans 133 residues: ATP synthase epsilon chain (133 aa).

Belongs to the ATPase epsilon chain family. In terms of assembly, F-type ATPases have 2 components, CF(1) - the catalytic core - and CF(0) - the membrane proton channel. CF(1) has five subunits: alpha(3), beta(3), gamma(1), delta(1), epsilon(1). CF(0) has three main subunits: a, b and c.

The protein resides in the cell membrane. In terms of biological role, produces ATP from ADP in the presence of a proton gradient across the membrane. This Lawsonia intracellularis (strain PHE/MN1-00) protein is ATP synthase epsilon chain.